We begin with the raw amino-acid sequence, 143 residues long: 3-dehydroquinate dehydratase (143 aa).

Catalysis depends on tyrosine 22, which acts as the Proton acceptor. Substrate is bound by residues asparagine 73, histidine 79, and aspartate 86. Histidine 99 serves as the catalytic Proton donor. Residues 100–101 (IS) and arginine 110 contribute to the substrate site.

This sequence belongs to the type-II 3-dehydroquinase family. Homododecamer.

The enzyme catalyses 3-dehydroquinate = 3-dehydroshikimate + H2O. It participates in metabolic intermediate biosynthesis; chorismate biosynthesis; chorismate from D-erythrose 4-phosphate and phosphoenolpyruvate: step 3/7. In terms of biological role, catalyzes a trans-dehydration via an enolate intermediate. The protein is 3-dehydroquinate dehydratase of Salinispora arenicola (strain CNS-205).